The chain runs to 382 residues: Pyruvate dehydrogenase E1 component subunit beta, mitochondrial (382 aa).

The N-terminal 46 residues, Met1–Tyr46, are a transit peptide targeting the mitochondrion. Position 112 (Glu112) interacts with thiamine diphosphate. Positions 165, 213, 214, 216, and 218 each coordinate K(+).

Eukaryotic pyruvate dehydrogenase (PDH) complexes are organized as a core consisting of the oligomeric dihydrolipoamide acetyl-transferase (E2), around which are arranged multiple copies of pyruvate dehydrogenase (E1), dihydrolipoamide dehydrogenase (E3) and protein X (E3BP) bound by non-covalent bonds. The Chaetomium thermophilum PDH complex contains 60 E2 units, 12 E3BP units, about 20 E1 units, and 12 or more E3 units. The units are organized in 1 E2 60-mer, 4 E3BP trimers, about 20 E1 tetramers, and a maximum of 12 E3 dimers. Pyruvate dehydrogenase (E1) is active as a tetramer of 2 alpha and 2 beta subunits. The E3BP trimers are bound inside the icosahedral core with tetrahedral symmetry. It depends on thiamine diphosphate as a cofactor.

The protein localises to the mitochondrion. The catalysed reaction is N(6)-[(R)-lipoyl]-L-lysyl-[protein] + pyruvate + H(+) = N(6)-[(R)-S(8)-acetyldihydrolipoyl]-L-lysyl-[protein] + CO2. Functionally, the 10-megadalton pyruvate dehydrogenase complex contains multiple copies of three enzymatic components: pyruvate dehydrogenase (E1), dihydrolipoamide acetyltransferase (E2) and lipoamide dehydrogenase (E3) and catalyzes the overall oxidative decarboxylation of pyruvate to form acetyl-CoA and CO(2). Within the complex, pyruvate and thiamine pyrophosphate (TPP or vitamin B1) are bound by pyruvate dehydrogenase E1 subunits alpha and beta and pyruvate is decarboxylated leading to the 2-carbon hydrohyethyl bound to TPP. The E2 component contains covalently-bound lipoyl cofactors and transfers the hydroxyethyl group from TPP to an oxidized form of covalently bound lipoamide, and the resulting acetyl group is then transferred to free coenzyme A to form acetyl-CoA and reduced dihydrolipoamide-E2. Finally, the flavoprotein dihydrolipoamide dehydrogenase (E3) re-oxidizes the lipoyl group of dihydrolipoamide-E2 to form lipoamide-E2 and NADH. A fourth subunit, E3BP, is responsible for tethering E3 in proximity to the core, forming the entire metabolon. The protein is Pyruvate dehydrogenase E1 component subunit beta, mitochondrial of Chaetomium thermophilum (strain DSM 1495 / CBS 144.50 / IMI 039719) (Thermochaetoides thermophila).